The primary structure comprises 252 residues: Hydroxyacylglutathione hydrolase (252 aa).

The Zn(2+) site is built by His54, His56, Asp58, His59, His113, Asp132, and His170.

Belongs to the metallo-beta-lactamase superfamily. Glyoxalase II family. Monomer. Zn(2+) is required as a cofactor.

The enzyme catalyses an S-(2-hydroxyacyl)glutathione + H2O = a 2-hydroxy carboxylate + glutathione + H(+). It functions in the pathway secondary metabolite metabolism; methylglyoxal degradation; (R)-lactate from methylglyoxal: step 2/2. Functionally, thiolesterase that catalyzes the hydrolysis of S-D-lactoyl-glutathione to form glutathione and D-lactic acid. The sequence is that of Hydroxyacylglutathione hydrolase from Thermosynechococcus vestitus (strain NIES-2133 / IAM M-273 / BP-1).